Here is a 313-residue protein sequence, read N- to C-terminus: MEQVNKTVVREFVVLGFSSLARLQQLLFVIFLLLYLFTLGTNAIIISTIVLDRALHTPMYFFLAILSCSEICYTFVIVPKMLVDLLSQKKTISFLGCAIQMFSFLFFGSSHSFLLAAMGYDRYMAICNPLRYSVLMGHGVCMGLMAAACACGFTVSLVTTSLVFHLPFHSSNQLHHFFCDISPVLKLASQHSGFSQLVIFMLGVFALVIPLLLILVSYIRIISAILKIPSSVGRYKTFSTCASHLIVVTVHYSCASFIYLRPKTNYTSSQDTLISVSYTILTPLFNPMIYSLRNKEFKSALRRTIGQTFYPLS.

At 1–25 (MEQVNKTVVREFVVLGFSSLARLQQ) the chain is on the extracellular side. Asn-5 carries an N-linked (GlcNAc...) asparagine glycan. A helical transmembrane segment spans residues 26-46 (LLFVIFLLLYLFTLGTNAIII). Topologically, residues 47-54 (STIVLDRA) are cytoplasmic. The helical transmembrane segment at 55 to 75 (LHTPMYFFLAILSCSEICYTF) threads the bilayer. The Extracellular portion of the chain corresponds to 76–99 (VIVPKMLVDLLSQKKTISFLGCAI). Residues 100-120 (QMFSFLFFGSSHSFLLAAMGY) form a helical membrane-spanning segment. Over 121-139 (DRYMAICNPLRYSVLMGHG) the chain is Cytoplasmic. The chain crosses the membrane as a helical span at residues 140 to 160 (VCMGLMAAACACGFTVSLVTT). The Extracellular portion of the chain corresponds to 161-197 (SLVFHLPFHSSNQLHHFFCDISPVLKLASQHSGFSQL). The chain crosses the membrane as a helical span at residues 198–217 (VIFMLGVFALVIPLLLILVS). The Cytoplasmic segment spans residues 218 to 237 (YIRIISAILKIPSSVGRYKT). Residues 238-258 (FSTCASHLIVVTVHYSCASFI) traverse the membrane as a helical segment. The Extracellular segment spans residues 259-271 (YLRPKTNYTSSQD). A glycan (N-linked (GlcNAc...) asparagine) is linked at Asn-265. Residues 272-292 (TLISVSYTILTPLFNPMIYSL) traverse the membrane as a helical segment. The Cytoplasmic segment spans residues 293 to 313 (RNKEFKSALRRTIGQTFYPLS).

This sequence belongs to the G-protein coupled receptor 1 family.

The protein localises to the cell membrane. Its function is as follows. Odorant receptor. The chain is Olfactory receptor 10K1 (OR10K1) from Homo sapiens (Human).